A 987-amino-acid polypeptide reads, in one-letter code: Leucine--tRNA ligase (987 aa).

Positions 69–80 (PYPSGKGLHVGH) match the 'HIGH' region motif. Positions 760–764 (KMGKS) match the 'KMSKS' region motif. Lys763 contacts ATP.

This sequence belongs to the class-I aminoacyl-tRNA synthetase family.

The protein resides in the cytoplasm. It catalyses the reaction tRNA(Leu) + L-leucine + ATP = L-leucyl-tRNA(Leu) + AMP + diphosphate. This is Leucine--tRNA ligase from Bifidobacterium longum (strain NCC 2705).